Reading from the N-terminus, the 462-residue chain is tRNA modification GTPase MnmE (462 aa).

(6S)-5-formyl-5,6,7,8-tetrahydrofolate is bound by residues Arg-23, Glu-88, and Arg-127. The 160-residue stretch at 224–383 (GLATVIIGRP…LEKAIADLFF (160 aa)) folds into the TrmE-type G domain. A K(+)-binding site is contributed by Asn-234. GTP-binding positions include 234–239 (NVGKSS), 253–259 (TDIPGTT), and 278–281 (DTAG). Ser-238 serves as a coordination point for Mg(2+). K(+)-binding residues include Thr-253, Ile-255, and Thr-258. Residue Thr-259 participates in Mg(2+) binding. Lys-462 is a binding site for (6S)-5-formyl-5,6,7,8-tetrahydrofolate.

It belongs to the TRAFAC class TrmE-Era-EngA-EngB-Septin-like GTPase superfamily. TrmE GTPase family. In terms of assembly, homodimer. Heterotetramer of two MnmE and two MnmG subunits. The cofactor is K(+).

The protein resides in the cytoplasm. Functionally, exhibits a very high intrinsic GTPase hydrolysis rate. Involved in the addition of a carboxymethylaminomethyl (cmnm) group at the wobble position (U34) of certain tRNAs, forming tRNA-cmnm(5)s(2)U34. The polypeptide is tRNA modification GTPase MnmE (Geobacillus thermodenitrificans (strain NG80-2)).